The primary structure comprises 338 residues: Ketol-acid reductoisomerase (NADP(+)) (338 aa).

The KARI N-terminal Rossmann domain maps to 1–181 (MQVYYDKDAD…GGGRAGVIET (181 aa)). NADP(+) is bound by residues 24–27 (YGSQ), arginine 47, serine 50, serine 52, and 82–85 (DEHQ). The active site involves histidine 107. Glycine 133 is an NADP(+) binding site. The region spanning 182–327 (SFKDETETDL…AKLRDMMPWI (146 aa)) is the KARI C-terminal knotted domain. 4 residues coordinate Mg(2+): aspartate 190, glutamate 194, glutamate 226, and glutamate 230. Residue serine 251 participates in substrate binding.

This sequence belongs to the ketol-acid reductoisomerase family. It depends on Mg(2+) as a cofactor.

It catalyses the reaction (2R)-2,3-dihydroxy-3-methylbutanoate + NADP(+) = (2S)-2-acetolactate + NADPH + H(+). The catalysed reaction is (2R,3R)-2,3-dihydroxy-3-methylpentanoate + NADP(+) = (S)-2-ethyl-2-hydroxy-3-oxobutanoate + NADPH + H(+). The protein operates within amino-acid biosynthesis; L-isoleucine biosynthesis; L-isoleucine from 2-oxobutanoate: step 2/4. It functions in the pathway amino-acid biosynthesis; L-valine biosynthesis; L-valine from pyruvate: step 2/4. In terms of biological role, involved in the biosynthesis of branched-chain amino acids (BCAA). Catalyzes an alkyl-migration followed by a ketol-acid reduction of (S)-2-acetolactate (S2AL) to yield (R)-2,3-dihydroxy-isovalerate. In the isomerase reaction, S2AL is rearranged via a Mg-dependent methyl migration to produce 3-hydroxy-3-methyl-2-ketobutyrate (HMKB). In the reductase reaction, this 2-ketoacid undergoes a metal-dependent reduction by NADPH to yield (R)-2,3-dihydroxy-isovalerate. In Thioalkalivibrio sulfidiphilus (strain HL-EbGR7), this protein is Ketol-acid reductoisomerase (NADP(+)).